The sequence spans 283 residues: tRNA-cytidine(32) 2-sulfurtransferase (283 aa).

The PP-loop motif motif lies at 49–54 (SGGKDS). [4Fe-4S] cluster-binding residues include Cys-124, Cys-127, and Cys-215.

It belongs to the TtcA family. Homodimer. The cofactor is Mg(2+). Requires [4Fe-4S] cluster as cofactor.

It is found in the cytoplasm. The enzyme catalyses cytidine(32) in tRNA + S-sulfanyl-L-cysteinyl-[cysteine desulfurase] + AH2 + ATP = 2-thiocytidine(32) in tRNA + L-cysteinyl-[cysteine desulfurase] + A + AMP + diphosphate + H(+). Its pathway is tRNA modification. Catalyzes the ATP-dependent 2-thiolation of cytidine in position 32 of tRNA, to form 2-thiocytidine (s(2)C32). The sulfur atoms are provided by the cysteine/cysteine desulfurase (IscS) system. The sequence is that of tRNA-cytidine(32) 2-sulfurtransferase from Acaryochloris marina (strain MBIC 11017).